The following is a 407-amino-acid chain: Tryptophan synthase beta chain (407 aa).

K91 carries the post-translational modification N6-(pyridoxal phosphate)lysine.

This sequence belongs to the TrpB family. In terms of assembly, tetramer of two alpha and two beta chains. Pyridoxal 5'-phosphate is required as a cofactor.

It catalyses the reaction (1S,2R)-1-C-(indol-3-yl)glycerol 3-phosphate + L-serine = D-glyceraldehyde 3-phosphate + L-tryptophan + H2O. Its pathway is amino-acid biosynthesis; L-tryptophan biosynthesis; L-tryptophan from chorismate: step 5/5. Functionally, the beta subunit is responsible for the synthesis of L-tryptophan from indole and L-serine. This Streptococcus pneumoniae (strain Hungary19A-6) protein is Tryptophan synthase beta chain.